A 530-amino-acid polypeptide reads, in one-letter code: Ubiquitin carboxyl-terminal hydrolase 17-like protein 24 (530 aa).

Positions 80–375 constitute a USP domain; it reads AGLQNMGNTC…QAYVLFYIQK (296 aa). C89 functions as the Nucleophile in the catalytic mechanism. The active-site Proton acceptor is the H334. Composition is skewed to basic and acidic residues over residues 382 to 392 and 398 to 412; these read SESVSRGREPR and DTDRRATQGELKRDH. Disordered regions lie at residues 382-412 and 477-530; these read SESVSRGREPRALGAEDTDRRATQGELKRDH and NHHP…LVCQ. Residues 493–505 are compositionally biased toward polar residues; that stretch reads TPTHQESMNTGTL. Residues 510-524 show a composition bias toward basic residues; it reads GRARRSKGKNKHSKR.

This sequence belongs to the peptidase C19 family. USP17 subfamily. Expressed in heart, brain, liver and skeletal muscle.

It localises to the nucleus. It is found in the nucleolus. The protein resides in the endoplasmic reticulum. The enzyme catalyses Thiol-dependent hydrolysis of ester, thioester, amide, peptide and isopeptide bonds formed by the C-terminal Gly of ubiquitin (a 76-residue protein attached to proteins as an intracellular targeting signal).. Its function is as follows. Deubiquitinating enzyme that removes conjugated ubiquitin from specific proteins to regulate different cellular processes that may include cell proliferation, progression through the cell cycle, apoptosis, cell migration, and the cellular response to viral infection. In Homo sapiens (Human), this protein is Ubiquitin carboxyl-terminal hydrolase 17-like protein 24 (USP17L24).